The following is a 399-amino-acid chain: Elongation factor Tu (399 aa).

A tr-type G domain is found at Lys-10–Glu-204. A G1 region spans residues Gly-19–Thr-26. GTP is bound at residue Gly-19 to Thr-26. Thr-26 contributes to the Mg(2+) binding site. Residues Gly-60–Asn-64 are G2. The G3 stretch occupies residues Asp-81–Gly-84. Residues Asp-81–His-85 and Asn-136–Asp-139 each bind GTP. A G4 region spans residues Asn-136–Asp-139. The segment at Ser-174–Leu-176 is G5.

It belongs to the TRAFAC class translation factor GTPase superfamily. Classic translation factor GTPase family. EF-Tu/EF-1A subfamily. Monomer.

It is found in the cytoplasm. It carries out the reaction GTP + H2O = GDP + phosphate + H(+). GTP hydrolase that promotes the GTP-dependent binding of aminoacyl-tRNA to the A-site of ribosomes during protein biosynthesis. The polypeptide is Elongation factor Tu (Synechococcus sp. (strain CC9902)).